The primary structure comprises 603 residues: MASASTSKYNSHSLENESIKRTSRDGVNRDLTEAVPRLPGETLITDKEVIYICPFNGPIKGRVYITNYRLYLRSLETDSALILDVPLGVISRIEKMGGATSRGENSYGLDITCKDMRNLRFALKQEGHSRRDMFEILTRYAFPLAHSLPLFAFLNEEKFNVDGWTVYNPVEEYRRQGLPNHHWRITFINKCYELCDTYPAPLVVPYRASDDDLRRVATFRSRNRIPVLSWIHPENKTVIVRCSQPLVGMSGKRNKDDEKYLDVIRETNKQISKLTIYDARPSVNAVANKATGGGYESDDAYHNAELFFLDIHNIHVMRESLKKVKDIVYPNVEESHWLSSLESTHWLEHIKLVLTGAIQVADKVSSGKSSVLVHCSDGWDRTAQLTSLAMLMLDSFYRSIEGFEILVQKEWISFGHKFASRIGHGDKNHTDADRSPIFLQFIDCVWQMSKQFPTAFEFNEQFLIIILDHLYSCRFGTFLFNCESARERQKVTERTVSLWSLINSNKEKFKNPFYTKEINRVLYPVASMRHLELWVNYYIRWNPRIKQQQPNPVEQRYMELLALRDEYIKRLEELQLANSAKLSDPPTSPSSPSQMMPHVQTHF.

Over residues 1 to 13 (MASASTSKYNSHS) the composition is skewed to polar residues. The disordered stretch occupies residues 1–25 (MASASTSKYNSHSLENESIKRTSRD). A phosphoserine mark is found at serine 13 and serine 18. Positions 14-25 (LENESIKRTSRD) are enriched in basic and acidic residues. The 69-residue stretch at 29–97 (RDLTEAVPRL…GVISRIEKMG (69 aa)) folds into the GRAM domain. A Myotubularin phosphatase domain is found at 163-538 (GWTVYNPVEE…RHLELWVNYY (376 aa)). Residues asparagine 288, asparagine 313, and isoleucine 314 each contribute to the a 1,2-diacyl-sn-glycero-3-phospho-(1D-myo-inositol-3,5-bisphosphate) site. Residues asparagine 288, asparagine 313, and isoleucine 314 each contribute to the a 1,2-diacyl-sn-glycero-3-phospho-(1D-myo-inositol-3-phosphate) site. Catalysis depends on cysteine 375, which acts as the Phosphocysteine intermediate. Positions 376, 377, 378, 379, 380, 381, 417, and 421 each coordinate a 1,2-diacyl-sn-glycero-3-phospho-(1D-myo-inositol-3,5-bisphosphate). A 1,2-diacyl-sn-glycero-3-phospho-(1D-myo-inositol-3-phosphate) contacts are provided by serine 376, aspartate 377, glycine 378, tryptophan 379, aspartate 380, and arginine 381. Arginine 421 serves as a coordination point for a 1,2-diacyl-sn-glycero-3-phospho-(1D-myo-inositol-3-phosphate). A Phosphothreonine modification is found at threonine 495. The segment at 579-603 (SAKLSDPPTSPSSPSQMMPHVQTHF) is disordered. Residue serine 588 is modified to Phosphoserine.

It belongs to the protein-tyrosine phosphatase family. Non-receptor class myotubularin subfamily. As to quaternary structure, heterodimer with MTMR12. Interacts with KMT2A/MLL1 (via SET domain). Interacts with DES in skeletal muscle but not in cardiac muscle. Interacts with SPEG.

It is found in the cytoplasm. The protein resides in the cell membrane. Its subcellular location is the cell projection. It localises to the filopodium. The protein localises to the ruffle. It is found in the late endosome. The protein resides in the myofibril. Its subcellular location is the sarcomere. The catalysed reaction is a 1,2-diacyl-sn-glycero-3-phospho-(1D-myo-inositol-3-phosphate) + H2O = a 1,2-diacyl-sn-glycero-3-phospho-(1D-myo-inositol) + phosphate. The enzyme catalyses a 1,2-diacyl-sn-glycero-3-phospho-(1D-myo-inositol-3,5-bisphosphate) + H2O = a 1,2-diacyl-sn-glycero-3-phospho-(1D-myo-inositol-5-phosphate) + phosphate. It catalyses the reaction 1,2-dioctanoyl-sn-glycero-3-phospho-(1-D-myo-inositol-3-phosphate) + H2O = 1,2-dioctanoyl-sn-glycero-3-phospho-(1D-myo-inositol) + phosphate. It carries out the reaction 1,2-dioctanoyl-sn-glycero-3-phospho-(1D-myo-inositol-3,5-bisphosphate) + H2O = 1,2-dioctanoyl-sn-glycero-3-phospho-(1D-myo-inositol-5-phosphate) + phosphate. The catalysed reaction is 1,2-dihexadecanoyl-sn-glycero-3-phospho-(1D-myo-inositol-3,5-phosphate) + H2O = 1,2-dihexadecanoyl-sn-glycero-3-phospho-(1D-myo-inositol-5-phosphate) + phosphate. Allosterically activated by phosphatidylinositol 5-phosphate (PI5P). Functionally, lipid phosphatase which dephosphorylates phosphatidylinositol 3-monophosphate (PI3P) and phosphatidylinositol 3,5-bisphosphate (PI(3,5)P2). Has also been shown to dephosphorylate phosphotyrosine- and phosphoserine-containing peptides. Negatively regulates EGFR degradation through regulation of EGFR trafficking from the late endosome to the lysosome. Plays a role in vacuolar formation and morphology. Regulates desmin intermediate filament assembly and architecture. Plays a role in mitochondrial morphology and positioning. Required for skeletal muscle maintenance but not for myogenesis. In skeletal muscles, stabilizes MTMR12 protein levels. The protein is Myotubularin of Pongo abelii (Sumatran orangutan).